The chain runs to 435 residues: Xylose isomerase (435 aa).

Catalysis depends on residues H99 and D102. E230, E266, H269, D294, D305, D307, and D337 together coordinate Mg(2+).

This sequence belongs to the xylose isomerase family. Homotetramer. Mg(2+) is required as a cofactor.

It localises to the cytoplasm. It carries out the reaction alpha-D-xylose = alpha-D-xylulofuranose. This Listeria welshimeri serovar 6b (strain ATCC 35897 / DSM 20650 / CCUG 15529 / CIP 8149 / NCTC 11857 / SLCC 5334 / V8) protein is Xylose isomerase.